Reading from the N-terminus, the 186-residue chain is NADH-dependent FMN reductase SfnF (186 aa).

The protein belongs to the SsuE family.

The enzyme catalyses FMNH2 + NAD(+) = FMN + NADH + 2 H(+). Its function is as follows. Involved in the dimethyl sulfide degradation pathway. Catalyzes the NADH-dependent reduction of FMN. This Pseudomonas putida (Arthrobacter siderocapsulatus) protein is NADH-dependent FMN reductase SfnF.